The sequence spans 352 residues: Peptide chain release factor 1 (352 aa).

Residue Q229 is modified to N5-methylglutamine.

This sequence belongs to the prokaryotic/mitochondrial release factor family. In terms of processing, methylated by PrmC. Methylation increases the termination efficiency of RF1.

It localises to the cytoplasm. Functionally, peptide chain release factor 1 directs the termination of translation in response to the peptide chain termination codons UAG and UAA. The sequence is that of Peptide chain release factor 1 from Granulibacter bethesdensis (strain ATCC BAA-1260 / CGDNIH1).